We begin with the raw amino-acid sequence, 247 residues long: PsbP domain-containing protein 3, chloroplastic (247 aa).

A chloroplast-targeting transit peptide spans 1 to 26 (MAAISPWLSSPQSFSNPRVTITDSRR). The transit peptide at 27–80 (CSSISAAISVLDSSNEEQHRISSRDHVGMKRRDVMLQIASSVFFLPLAISPAFA) directs the protein to the thylakoid.

This sequence belongs to the PsbP family.

It is found in the plastid. Its subcellular location is the chloroplast thylakoid lumen. This is PsbP domain-containing protein 3, chloroplastic (PPD3) from Arabidopsis thaliana (Mouse-ear cress).